Reading from the N-terminus, the 134-residue chain is ATP synthase epsilon chain (134 aa).

This sequence belongs to the ATPase epsilon chain family. In terms of assembly, F-type ATPases have 2 components, CF(1) - the catalytic core - and CF(0) - the membrane proton channel. CF(1) has five subunits: alpha(3), beta(3), gamma(1), delta(1), epsilon(1). CF(0) has three main subunits: a, b and c.

It localises to the cell inner membrane. Its function is as follows. Produces ATP from ADP in the presence of a proton gradient across the membrane. This is ATP synthase epsilon chain from Solibacter usitatus (strain Ellin6076).